Here is a 150-residue protein sequence, read N- to C-terminus: Small ribosomal subunit protein eS19 (150 aa).

Belongs to the eukaryotic ribosomal protein eS19 family. Part of the 30S ribosomal subunit.

Its function is as follows. May be involved in maturation of the 30S ribosomal subunit. This Pyrococcus abyssi (strain GE5 / Orsay) protein is Small ribosomal subunit protein eS19 (rps19e).